Reading from the N-terminus, the 228-residue chain is uncharacterized protein (228 aa).

It localises to the mitochondrion. This is an uncharacterized protein from Emericella nidulans (Aspergillus nidulans).